A 174-amino-acid polypeptide reads, in one-letter code: Protein SHI RELATED SEQUENCE 3 (174 aa).

Zn(2+) contacts are provided by Cys9, Cys12, Cys20, Cys25, Cys29, and Cys36. Positions 9–36 form a DNA-binding region, zn(2)-C6 fungal-type; degenerate; that stretch reads CEDCGNQAKKDCVYMRCRTCCKSKAFHC. The short motif at 110 to 113 is the Required for homo- and heterodimerization element; the sequence is IGGH.

Belongs to the SHI protein family.

It localises to the nucleus. Transcription activator that binds DNA on 5'-ACTCTAC-3' and promotes auxin homeostasis-regulating gene expression (e.g. YUC genes), as well as genes affecting stamen development, cell expansion and timing of flowering. Synergistically with other SHI-related proteins, regulates gynoecium, stamen and leaf development in a dose-dependent manner, controlling apical-basal patterning. Promotes style and stigma formation, and influences vascular development during gynoecium development. May also have a role in the formation and/or maintenance of the shoot apical meristem (SAM). This Arabidopsis thaliana (Mouse-ear cress) protein is Protein SHI RELATED SEQUENCE 3 (SRS3).